Reading from the N-terminus, the 559-residue chain is Protein NRT1/ PTR FAMILY 2.8 (559 aa).

Transmembrane regions (helical) follow at residues 57 to 77, 92 to 112, 132 to 152, 178 to 198, 206 to 226, 321 to 341, 374 to 394, 404 to 424, 437 to 457, 481 to 501, and 529 to 549; these read GVFL…LTLA, LLLG…TAAL, KWQL…AGGV, FFNW…TGVV, WVIG…TFVI, LKCV…FILT, VSMI…IPIV, LTLK…VAGF, GSFV…LAGL, VAGA…TLLI, and YFFI…LFAS.

This sequence belongs to the major facilitator superfamily. Proton-dependent oligopeptide transporter (POT/PTR) (TC 2.A.17) family. In terms of tissue distribution, expressed in flowers.

The protein resides in the membrane. The sequence is that of Protein NRT1/ PTR FAMILY 2.8 (NPF2.8) from Arabidopsis thaliana (Mouse-ear cress).